The following is a 294-amino-acid chain: tRNA pseudouridine synthase B (294 aa).

Asp-39 acts as the Nucleophile in catalysis.

Belongs to the pseudouridine synthase TruB family. Type 1 subfamily.

The enzyme catalyses uridine(55) in tRNA = pseudouridine(55) in tRNA. In terms of biological role, responsible for synthesis of pseudouridine from uracil-55 in the psi GC loop of transfer RNAs. This is tRNA pseudouridine synthase B from Streptococcus pyogenes serotype M6 (strain ATCC BAA-946 / MGAS10394).